A 250-amino-acid polypeptide reads, in one-letter code: 3-deoxy-manno-octulosonate cytidylyltransferase (250 aa).

This sequence belongs to the KdsB family.

The protein resides in the cytoplasm. It catalyses the reaction 3-deoxy-alpha-D-manno-oct-2-ulosonate + CTP = CMP-3-deoxy-beta-D-manno-octulosonate + diphosphate. It participates in nucleotide-sugar biosynthesis; CMP-3-deoxy-D-manno-octulosonate biosynthesis; CMP-3-deoxy-D-manno-octulosonate from 3-deoxy-D-manno-octulosonate and CTP: step 1/1. Its pathway is bacterial outer membrane biogenesis; lipopolysaccharide biosynthesis. Activates KDO (a required 8-carbon sugar) for incorporation into bacterial lipopolysaccharide in Gram-negative bacteria. This is 3-deoxy-manno-octulosonate cytidylyltransferase from Bacteroides thetaiotaomicron (strain ATCC 29148 / DSM 2079 / JCM 5827 / CCUG 10774 / NCTC 10582 / VPI-5482 / E50).